Consider the following 145-residue polypeptide: Transcription antitermination protein NusB (145 aa).

Belongs to the NusB family.

Its function is as follows. Involved in transcription antitermination. Required for transcription of ribosomal RNA (rRNA) genes. Binds specifically to the boxA antiterminator sequence of the ribosomal RNA (rrn) operons. The polypeptide is Transcription antitermination protein NusB (Geotalea uraniireducens (strain Rf4) (Geobacter uraniireducens)).